A 608-amino-acid chain; its full sequence is DNA mismatch repair protein MutL (608 aa).

This sequence belongs to the DNA mismatch repair MutL/HexB family.

In terms of biological role, this protein is involved in the repair of mismatches in DNA. It is required for dam-dependent methyl-directed DNA mismatch repair. May act as a 'molecular matchmaker', a protein that promotes the formation of a stable complex between two or more DNA-binding proteins in an ATP-dependent manner without itself being part of a final effector complex. The sequence is that of DNA mismatch repair protein MutL from Anaeromyxobacter dehalogenans (strain 2CP-C).